Here is a 101-residue protein sequence, read N- to C-terminus: Chaperone modulatory protein CbpM (101 aa).

It belongs to the CbpM family.

Functionally, interacts with CbpA and inhibits both the DnaJ-like co-chaperone activity and the DNA binding activity of CbpA. Together with CbpA, modulates the activity of the DnaK chaperone system. Does not inhibit the co-chaperone activity of DnaJ. This chain is Chaperone modulatory protein CbpM, found in Escherichia coli (strain K12 / MC4100 / BW2952).